The primary structure comprises 76 residues: Omega-agatoxin-Aa3a (76 aa).

Disulfide bonds link Cys-2–Cys-19, Cys-9–Cys-25, Cys-16–Cys-52, Cys-18–Cys-40, Cys-27–Cys-38, and Cys-59–Cys-67.

The protein belongs to the neurotoxin 04 (omega-agtx) family. 03 (type II/III omega-agtx) subfamily. As to expression, expressed by the venom gland.

It is found in the secreted. In terms of biological role, omega-agatoxin are antagonist of voltage-gated calcium channels. They block insect neuromuscular transmission presynaptically. Potent blocker of N- (Cav2.2/CACNA1B) and L-type (Cav1/CACNA1) calcium channels. This is Omega-agatoxin-Aa3a from Agelenopsis aperta (North American funnel-web spider).